Here is a 1411-residue protein sequence, read N- to C-terminus: DNA-directed RNA polymerase subunit beta' (1411 aa).

Residues Cys70, Cys72, Cys85, and Cys88 each coordinate Zn(2+). Asp458, Asp460, and Asp462 together coordinate Mg(2+). Residues Cys813, Cys887, Cys894, and Cys897 each coordinate Zn(2+). The tract at residues 1384-1411 is disordered; it reads AEAAEMATTGSDEAPEVEGSGVESGSAE.

It belongs to the RNA polymerase beta' chain family. The RNAP catalytic core consists of 2 alpha, 1 beta, 1 beta' and 1 omega subunit. When a sigma factor is associated with the core the holoenzyme is formed, which can initiate transcription. The cofactor is Mg(2+). Requires Zn(2+) as cofactor.

It catalyses the reaction RNA(n) + a ribonucleoside 5'-triphosphate = RNA(n+1) + diphosphate. Its function is as follows. DNA-dependent RNA polymerase catalyzes the transcription of DNA into RNA using the four ribonucleoside triphosphates as substrates. The protein is DNA-directed RNA polymerase subunit beta' of Paracidovorax citrulli (strain AAC00-1) (Acidovorax citrulli).